Reading from the N-terminus, the 524-residue chain is Glutamyl-tRNA(Gln) amidotransferase subunit A, mitochondrial (524 aa).

Residues K76 and S171 each act as charge relay system in the active site. The active-site Acyl-ester intermediate is the S195.

The protein belongs to the amidase family. GatA subfamily. Subunit of the heterotrimeric GatCAB amidotransferase (AdT) complex, composed of A (qrsl1), B (gatb) and C (gatc) subunits.

The protein localises to the mitochondrion. It catalyses the reaction L-glutamyl-tRNA(Gln) + L-glutamine + ATP + H2O = L-glutaminyl-tRNA(Gln) + L-glutamate + ADP + phosphate + H(+). In terms of biological role, allows the formation of correctly charged Gln-tRNA(Gln) through the transamidation of misacylated Glu-tRNA(Gln) in the mitochondria. The reaction takes place in the presence of glutamine and ATP through an activated gamma-phospho-Glu-tRNA(Gln). The polypeptide is Glutamyl-tRNA(Gln) amidotransferase subunit A, mitochondrial (qrsl1) (Xenopus laevis (African clawed frog)).